Here is a 584-residue protein sequence, read N- to C-terminus: Optineurin (584 aa).

Residues 1–32 (MSHQPLSCLTEKGDSPCETPGNGPSNMVHPSL) are disordered. The stretch at 38-180 (EELLQQMKEL…VSELQLKLNS (143 aa)) forms a coiled coil. Positions 58-219 (MKLNNQAMKG…TPTRTDPISL (162 aa)) are interaction with Rab8. Positions 186-191 (DSFVEI) match the LIR motif. Phosphoserine is present on Ser187. Coiled-coil stretches lie at residues 243–278 (CLRE…HSST) and 307–511 (IQVT…DIEE). Positions 267–295 (DFEKKANGHSSTEKQTARRADREKEDKGQ) are enriched in basic and acidic residues. Residues 267–302 (DFEKKANGHSSTEKQTARRADREKEDKGQESVGSEV) form a disordered region. Ser345 is subject to Phosphoserine. Residues 414-584 (TKQQAEKVDK…LQIHVMDCII (171 aa)) are interaction with HD. An interaction with MYO6 region spans residues 415-524 (KQQAEKVDKM…RQSLMEMQCR (110 aa)). A UBAN motif is present at residues 477–482 (DFHAER). Position 530 is a phosphoserine (Ser530). The segment at 554 to 584 (PRSIPIHSCPKCGEVLPDIDTLQIHVMDCII) adopts a CCHC NOA-type zinc-finger fold. The Zn(2+) site is built by Cys562, Cys565, His578, and Cys582.

As to quaternary structure, self-associates. Interacts with HD, GTF3A, TRAF3, TBK1 and MYO6. Interacts (via UBAN) with ubiquitinated TFRC. Interacts with active GTP-bound Rab8 (RAB8A and/or RAB8B). Interacts with TBC1D17. Binds to linear ubiquitin chains. Interacts with LC3 family members MAP1LC3A, MAP1LC3B, GABARAP, GABARAPL1 and GABARAPL2; OPTN phosphorylation increases the association (at least with MAP1LC3B). Interacts with RAB12; the interaction may be indirect. Interacts with TBK1; this interaction leads to the Golgi localization of TBK1 and its subsequent activation. Interacts with palmitoyltransferase ZDHHC17/HIP14; the interaction does not lead to palmitoylation of OPTN. Interacts with CYLD. Interacts with TOM1; the interaction is indirect and is mediated by MYO6, which acts as a bridge between TOM1 and OPTN. Interacts with USP12; the interaction is independent of USP12 deubiquitinase activity and may be involved in regulation of autophagic flux. Phosphorylated by TBK1, leading to restrict bacterial proliferation in case of infection. As to expression, in eye, it is expressed in anterior segment, retina, and optic nerve blood vessels (at protein level). Highly expressed in adult liver, heart and testis.

It localises to the cytoplasm. Its subcellular location is the perinuclear region. The protein localises to the golgi apparatus. The protein resides in the trans-Golgi network. It is found in the cytoplasmic vesicle. It localises to the autophagosome. Its subcellular location is the recycling endosome. Functionally, plays an important role in the maintenance of the Golgi complex, in membrane trafficking, in exocytosis, through its interaction with myosin VI and Rab8. Links myosin VI to the Golgi complex and plays an important role in Golgi ribbon formation. Plays a role in the activation of innate immune response during viral infection. Mechanistically, recruits TBK1 at the Golgi apparatus, promoting its trans-phosphorylation after RLR or TLR3 stimulation. In turn, activated TBK1 phosphorylates its downstream partner IRF3 to produce IFN-beta. Plays a neuroprotective role in the eye and optic nerve. May act by regulating membrane trafficking and cellular morphogenesis via a complex that contains Rab8 and huntingtin (HD). Mediates the interaction of Rab8 with the probable GTPase-activating protein TBC1D17 during Rab8-mediated endocytic trafficking, such as that of transferrin receptor (TFRC/TfR); regulates Rab8 recruitment to tubules emanating from the endocytic recycling compartment. Autophagy receptor that interacts directly with both the cargo to become degraded and an autophagy modifier of the MAP1 LC3 family; targets ubiquitin-coated bacteria (xenophagy), such as cytoplasmic Salmonella enterica, and appears to function in the same pathway as SQSTM1 and CALCOCO2/NDP52. The chain is Optineurin (Optn) from Mus musculus (Mouse).